The primary structure comprises 584 residues: Cationic amino acid transporter 7, chloroplastic (584 aa).

A chloroplast-targeting transit peptide spans 1-49 (MEAQYRNHDGDTSFSSLRVYLNSLSDTPSRFSRRAVSVSTSYDEMSRVR). The next 14 membrane-spanning stretches (helical) occupy residues 62-82 (WYDL…FVTT), 90-110 (AGPS…LSAF), 131-151 (ITFG…DYVL), 185-205 (GFNE…FVIC), 214-234 (VNMV…VMGF), 254-274 (FFPF…LSYI), 293-313 (IPMG…LMAI), 346-366 (VVGI…MLGQ), 396-416 (ASAF…LNVL), 417-437 (LNLV…AVIF), 449-469 (WPTL…TLVW), 480-500 (FILG…HCVV), 508-528 (FWGV…NIFL), and 540-560 (FGFF…HASY).

This sequence belongs to the amino acid-polyamine-organocation (APC) superfamily. Cationic amino acid transporter (CAT) (TC 2.A.3.3) family.

It localises to the plastid. Its subcellular location is the chloroplast membrane. Its function is as follows. Permease involved in the transport of the cationic amino acids. In Arabidopsis thaliana (Mouse-ear cress), this protein is Cationic amino acid transporter 7, chloroplastic (CAT7).